A 294-amino-acid polypeptide reads, in one-letter code: Ethanolamine ammonia-lyase small subunit (294 aa).

The adenosylcob(III)alamin site is built by Val207 and Glu228.

It belongs to the EutC family. In terms of assembly, the basic unit is a heterodimer which dimerizes to form tetramers. The heterotetramers trimerize; 6 large subunits form a core ring with 6 small subunits projecting outwards. Requires adenosylcob(III)alamin as cofactor.

The protein localises to the bacterial microcompartment. It catalyses the reaction ethanolamine = acetaldehyde + NH4(+). It functions in the pathway amine and polyamine degradation; ethanolamine degradation. In terms of biological role, catalyzes the deamination of various vicinal amino-alcohols to oxo compounds. Allows this organism to utilize ethanolamine as the sole source of nitrogen and carbon in the presence of external vitamin B12. The protein is Ethanolamine ammonia-lyase small subunit of Clostridium tetani (strain Massachusetts / E88).